A 521-amino-acid polypeptide reads, in one-letter code: Bifunctional purine biosynthesis protein PurH (521 aa).

Residues 1–149 (MSDPVIKRAL…KNNESVTVVT (149 aa)) form the MGS-like domain.

This sequence belongs to the PurH family.

The catalysed reaction is (6R)-10-formyltetrahydrofolate + 5-amino-1-(5-phospho-beta-D-ribosyl)imidazole-4-carboxamide = 5-formamido-1-(5-phospho-D-ribosyl)imidazole-4-carboxamide + (6S)-5,6,7,8-tetrahydrofolate. It carries out the reaction IMP + H2O = 5-formamido-1-(5-phospho-D-ribosyl)imidazole-4-carboxamide. The protein operates within purine metabolism; IMP biosynthesis via de novo pathway; 5-formamido-1-(5-phospho-D-ribosyl)imidazole-4-carboxamide from 5-amino-1-(5-phospho-D-ribosyl)imidazole-4-carboxamide (10-formyl THF route): step 1/1. It functions in the pathway purine metabolism; IMP biosynthesis via de novo pathway; IMP from 5-formamido-1-(5-phospho-D-ribosyl)imidazole-4-carboxamide: step 1/1. The polypeptide is Bifunctional purine biosynthesis protein PurH (Chlorobium phaeobacteroides (strain DSM 266 / SMG 266 / 2430)).